The sequence spans 314 residues: UPF0761 membrane protein VP0125 (314 aa).

6 helical membrane passes run 41–61 (YLAY…LSIL), 104–124 (MSAV…SNID), 139–159 (LVFS…LVGA), 185–205 (FLRW…YILV), 217–237 (VGAA…ALYI), and 249–269 (ALAA…IVLL). The interval 295 to 314 (ESQLANEGSESSDSANSTSQ) is disordered.

The protein belongs to the UPF0761 family.

The protein resides in the cell inner membrane. The protein is UPF0761 membrane protein VP0125 of Vibrio parahaemolyticus serotype O3:K6 (strain RIMD 2210633).